The chain runs to 823 residues: MDLMELLKQAQRLTNETNTDTEVPGVERTMSQVLQATKEFHSRVTQMGTNDLQAHILLGSKGVDLPKLTQKLESLSARQTFEPIDPVTETNVQAYLKNERENAILSVIDETNRSIFKSVERQKWRCIYSEWGEEKEALLNALVGPNQQDFPDVQFQIVPTAMADEPTPYSQLNGHEQMYAEQIAIHNQSIILGRRPNLLSTLAHVVQDSFNDESVAEMWNVLQFMTALPPVSSTIDPIKNRQTSPQFVEQARTYLERRYRTYMRKFIVANLAKARRGGIPSVYHMVRSYVGVTLQGQRALYGLHDVNNGQPLWPHVYYSLRSGDMDAAALYLKESGTCPDLLTLLTLRKNGDRDNLMVKLEGQLKLEYNSRLRACTDPYKKAVYVVLLACDPHFTHVELMRSIDDFLWMQLSILRRSDQSDSNTEQLTFSGLQSLILEKYGENYFNAREKAALYFQVLTLTGQFEAAIEFLARTEKNRTHAIHMAIALNEISMLGTPRSVEQSLLSSDPDDPKPMKRLNLVRLIVMYTKCFERTDTTQALHYYYLLRNFKSENGRGNVMLTCVCDLLVEKCDDEMLELIFGTEDKKNGLRYGGIYAEFQIHECDKYSLAEMVGDELSKRGDYELAIELYFIGGQLDKALRLVNSLLAQVVHQPTQNGSVRNRLGDIINRLDAALVVRKSDVEVQVVVTYTVLTKVMKFFDHYHEGALRSALEILTNNHLIPASSLEVDECVTNIKRMGPEVIKVLPDILLASMDIVYQEYVKLMDSNETASGFFDESKCVNKEPAVKHLRDRAKAFTNMAASVPYRMPSTTNQRLVQLEILMH.

The protein belongs to the nucleoporin interacting component (NIC) family. In terms of assembly, part of the nuclear pore complex (NPC). Interacts with msk (via C-terminus); this association might be facilitated by Nup75. Interacts with Mad (preferentially when phosphorylated). Interacts with Nup154 (via N-terminus). Interacts with the Polycomb group (PcG) proteins Pc and E(z).

The protein localises to the nucleus membrane. It is found in the nucleus. Its subcellular location is the nuclear pore complex. It localises to the nucleoplasm. Its function is as follows. Required for nuclear pore complex assembly, maintenance and function. Required for nuclear import of phosphorylated Mad via importin msk. Has no role in classical nuclear localization signal (cNLS)-dependent nuclear import via importin-beta. Mediates the association between the nuclear pore complex and a subclass of silenced regions bound by Polycomb group (PcG) proteins, enables long-range interactions between Polycomb loci and contributes to repression of polycomb targets. Together with Nup62 and Nup154, contributes to karyosome morphology and chromatin organization including attachment to the nuclear envelope in oocytes and nurse cells. The protein is Nuclear pore complex protein Nup93-1 of Drosophila melanogaster (Fruit fly).